The following is a 574-amino-acid chain: Alpha-farnesene synthase (574 aa).

Mn(2+) is bound by residues D326, D330, and E478. The DDXXD motif signature appears at 326 to 330 (DDIYD).

The protein belongs to the terpene synthase family. Tpsd subfamily. Mn(2+) serves as cofactor.

The protein resides in the cytoplasm. It carries out the reaction (2E,6E)-farnesyl diphosphate = (3E,6E)-alpha-farnesene + diphosphate. It participates in terpene metabolism; oleoresin biosynthesis. Functionally, involved in sesquiterpene (C15) biosynthesis. The major product is alpha-farnesene. In Pinus taeda (Loblolly pine), this protein is Alpha-farnesene synthase (PT5).